Here is a 547-residue protein sequence, read N- to C-terminus: Beta,beta-carotene 15,15'-dioxygenase (547 aa).

Fe cation is bound by residues His172, His237, His308, and His514. A compositionally biased stretch (basic and acidic residues) spans 528–540; that stretch reads QAASEEQRDRASD. The segment at 528-547 is disordered; sequence QAASEEQRDRASDCHGAPLT.

Belongs to the carotenoid oxygenase family. Fe(2+) serves as cofactor. In terms of tissue distribution, highly expressed in retinal pigment epithelium. Also expressed in kidney, testis, liver, brain, small intestine and colon.

It localises to the cytoplasm. The protein localises to the cytosol. It catalyses the reaction all-trans-beta-carotene + O2 = 2 all-trans-retinal. It functions in the pathway cofactor metabolism; retinol metabolism. Functionally, symmetrically cleaves beta-carotene into two molecules of retinal using a dioxygenase mechanism. The polypeptide is Beta,beta-carotene 15,15'-dioxygenase (Homo sapiens (Human)).